A 422-amino-acid polypeptide reads, in one-letter code: Serine--tRNA ligase (422 aa).

Threonine 229–glutamate 231 provides a ligand contact to L-serine. Position 260-262 (arginine 260–glutamate 262) interacts with ATP. Residue glutamate 283 coordinates L-serine. Glutamate 347 to serine 350 lines the ATP pocket. Residue serine 383 participates in L-serine binding.

It belongs to the class-II aminoacyl-tRNA synthetase family. Type-1 seryl-tRNA synthetase subfamily. Homodimer. The tRNA molecule binds across the dimer.

The protein localises to the cytoplasm. It carries out the reaction tRNA(Ser) + L-serine + ATP = L-seryl-tRNA(Ser) + AMP + diphosphate + H(+). It catalyses the reaction tRNA(Sec) + L-serine + ATP = L-seryl-tRNA(Sec) + AMP + diphosphate + H(+). Its pathway is aminoacyl-tRNA biosynthesis; selenocysteinyl-tRNA(Sec) biosynthesis; L-seryl-tRNA(Sec) from L-serine and tRNA(Sec): step 1/1. Functionally, catalyzes the attachment of serine to tRNA(Ser). Is also able to aminoacylate tRNA(Sec) with serine, to form the misacylated tRNA L-seryl-tRNA(Sec), which will be further converted into selenocysteinyl-tRNA(Sec). The chain is Serine--tRNA ligase from Natranaerobius thermophilus (strain ATCC BAA-1301 / DSM 18059 / JW/NM-WN-LF).